Reading from the N-terminus, the 447-residue chain is Vasoactive intestinal polypeptide receptor (447 aa).

Residues 1–103 (MCDVVNEIEL…VDDDSFFRSV (103 aa)) lie on the Extracellular side of the membrane. 3 disulfide bridges follow: cysteine 15-cysteine 36, cysteine 27-cysteine 69, and cysteine 50-cysteine 86. Asparagine 17, asparagine 22, asparagine 64, and asparagine 91 each carry an N-linked (GlcNAc...) asparagine glycan. A helical transmembrane segment spans residues 104-128 (KIGYTIGHSVSLISLTTAIVILCMS). Topologically, residues 129–135 (RKLHCTR) are cytoplasmic. Residues 136–155 (NYIHMHLFVSFILKAIAVFV) traverse the membrane as a helical segment. The Extracellular portion of the chain corresponds to 156–178 (KDAVLYDVIQESDNCSTASVGCK). An N-linked (GlcNAc...) asparagine glycan is attached at asparagine 169. Cysteine 177 and cysteine 247 are disulfide-bonded. The helical transmembrane segment at 179-202 (AVIVFFQYCIMASFFWLLVEGLYL) threads the bilayer. The Cytoplasmic segment spans residues 203 to 216 (HALLAVSFFSERKY). A helical membrane pass occupies residues 217 to 238 (FWWYILIGWGGPTIFIMAWSFA). Topologically, residues 239–256 (KAYFNDVGCWDIIENSDL) are extracellular. Residues 257–280 (FWWIIKTPILASILMNFILFICII) form a helical membrane-spanning segment. The Cytoplasmic portion of the chain corresponds to 281–305 (RILRQKINCPDIGRNESNQYSRLAK). The chain crosses the membrane as a helical span at residues 306–325 (STLLLIPLFGINFIIFAFIP). The Extracellular segment spans residues 326–337 (ENIKTELRLVFD). A helical transmembrane segment spans residues 338 to 357 (LILGSFQGFVVAVLYCFLNG). Topologically, residues 358–447 (EVQAEIKRKW…KGHEDVREVS (90 aa)) are cytoplasmic.

This sequence belongs to the G-protein coupled receptor 2 family.

The protein resides in the cell membrane. Functionally, this is a receptor for VIP. The activity of this receptor is mediated by G proteins which activate adenylyl cyclase. The protein is Vasoactive intestinal polypeptide receptor (vipr1) of Carassius auratus (Goldfish).